The sequence spans 234 residues: MGLGVRAAPFTYVAHALAVAAATMVLVWCIHFRGGLAFEATNKNLIFNVHPVLMLIGYIILGSEAIMVYKVLPTWKHDTTKLIHLILHAIALVFGAVGIYCAFKFHNESGIANLYSLHSWLGIGTICLYGIQWIFGFVAFFFPRASPSVRKGVLPWHILFGLFVYILALATAELGFLEKLTFLQSSGLDKYGAEAFLVNFTALIVVLFGASVVVAAVSPARVEEPHEYAPIPES.

At 1–9 (MGLGVRAAP) the chain is on the cytoplasmic side. The helical transmembrane segment at 10–30 (FTYVAHALAVAAATMVLVWCI) threads the bilayer. Residues 13–217 (VAHALAVAAA…FGASVVVAAV (205 aa)) form the Cytochrome b561 domain. The Extracellular portion of the chain corresponds to 31 to 48 (HFRGGLAFEATNKNLIFN). The chain crosses the membrane as a helical span at residues 49 to 69 (VHPVLMLIGYIILGSEAIMVY). Histidine 50 is a heme b binding site. 65 to 73 (AIMVYKVLP) contributes to the L-ascorbate binding site. Over 70-82 (KVLPTWKHDTTKL) the chain is Cytoplasmic. The helical transmembrane segment at 83–103 (IHLILHAIALVFGAVGIYCAF) threads the bilayer. Heme b contacts are provided by histidine 84 and histidine 118. Residues 104-121 (KFHNESGIANLYSLHSWL) lie on the Extracellular side of the membrane. 114–123 (LYSLHSWLGI) provides a ligand contact to monodehydro-L-ascorbate radical. Residues 122 to 142 (GIGTICLYGIQWIFGFVAFFF) traverse the membrane as a helical segment. Residues 143-151 (PRASPSVRK) lie on the Cytoplasmic side of the membrane. Residues 152–172 (GVLPWHILFGLFVYILALATA) traverse the membrane as a helical segment. Histidine 157 contributes to the heme b binding site. The Extracellular portion of the chain corresponds to 173-194 (ELGFLEKLTFLQSSGLDKYGAE). A helical transmembrane segment spans residues 195-215 (AFLVNFTALIVVLFGASVVVA). Residues 216 to 234 (AVSPARVEEPHEYAPIPES) lie on the Cytoplasmic side of the membrane.

The cofactor is heme b.

It is found in the membrane. Two-heme-containing cytochrome. Catalyzes ascorbate-dependent trans-membrane electron transfer by utilizing a concerted H(+)/e(-) transfer mechanism. The sequence is that of Probable ascorbate-specific transmembrane electron transporter 1 from Oryza sativa subsp. japonica (Rice).